The chain runs to 42 residues: Potassium channel toxin gamma-KTx 1.4 (42 aa).

4 disulfide bridges follow: C5–C23, C11–C34, C20–C39, and C24–C41.

This sequence belongs to the ergtoxin family. Gamma-KTx 1 subfamily. In terms of tissue distribution, expressed by the venom gland.

The protein resides in the secreted. Blocks Kv11/ERG potassium channels. The polypeptide is Potassium channel toxin gamma-KTx 1.4 (Centruroides sculpturatus (Arizona bark scorpion)).